Consider the following 268-residue polypeptide: MQQTLPVTRVSPRVRSLQRFEWPALGLPVTLMLLLVFWQAGVTLSGYPAFILPSPALVAGRFWQALSSGLLWQHTLATLSAALGGFTLALIIALILGYTLAHIRWLEQALAPVLAASQAIPVVAVAPLIILWFGAGLTSKVLVAALITFLPILINTVVAIRSIPRELIEMAYISGANRWQLLRYVEAPLALPVLFGGVRTGLALATTGAVVGEFVAGRVGLGALINIARGLFDTPLIFVALATLALITLTLYVLAGLLERLLVRWEAS.

Transmembrane regions (helical) follow at residues 24-44 (ALGLPVTLMLLLVFWQAGVTL), 76-96 (LATLSAALGGFTLALIIALIL), 119-139 (AIPVVAVAPLIILWFGAGLTS), 140-160 (KVLVAALITFLPILINTVVAI), 185-205 (VEAPLALPVLFGGVRTGLALA), and 236-256 (LIFVALATLALITLTLYVLAG). The 181-residue stretch at 75-255 (TLATLSAALG…LITLTLYVLA (181 aa)) folds into the ABC transmembrane type-1 domain.

This sequence belongs to the binding-protein-dependent transport system permease family. The complex is likely composed of an ATP-binding protein, a transmembrane protein (RibX) and a solute-binding protein (RibY).

It localises to the cell membrane. Functionally, part of an ABC transporter complex that transports riboflavin into the cell. This chain is Riboflavin transport system permease protein RibX, found in Chloroflexus aurantiacus (strain ATCC 29366 / DSM 635 / J-10-fl).